The primary structure comprises 753 residues: Replication restart protein PriA (753 aa).

The Helicase ATP-binding domain occupies 228-395 (SLVAEQFQTC…LSKKYTLSVL (168 aa)). 241–248 (GVTGSGKT) serves as a coordination point for ATP. A DEAH box motif is present at residues 337 to 340 (DEEH). 8 residues coordinate Zn(2+): C458, C461, C467, C470, C485, C488, C499, and C502. The Helicase C-terminal domain maps to 491-646 (RLSKPITSCP…DFPAFYKEEI (156 aa)).

The protein belongs to the helicase family. PriA subfamily. Component of the replication restart primosome. The cofactor is Zn(2+).

It carries out the reaction Couples ATP hydrolysis with the unwinding of duplex DNA by translocating in the 3'-5' direction.. The catalysed reaction is ATP + H2O = ADP + phosphate + H(+). In terms of biological role, initiates the restart of stalled replication forks, which reloads the replicative helicase on sites other than the origin of replication. Recognizes and binds to abandoned replication forks and remodels them to uncover a helicase loading site. Promotes assembly of the primosome at these replication forks. In Chlamydia trachomatis serovar D (strain ATCC VR-885 / DSM 19411 / UW-3/Cx), this protein is Replication restart protein PriA.